We begin with the raw amino-acid sequence, 429 residues long: MQVSVETTQGLGRRVTITIAADSIETAVKSELVNVAKKVRIDGFRKGKVPMNIVAQRYGASVRQDVLGDLMSRNFIDAIIKEKINPAGAPTYVPGEYKLGEDFTYSVEFEVYPEVELQGLEAIEVEKPIVEVTDADVDGMLDTLRKQQATWKEKDGAVEAEDRVTIDFTGSVDGEEFEGGKASDFVLAMGQGRMIPGFEDGIKGHKAGEEFTIDVTFPEEYHAENLKGKAAKFAINLKKVEERELPELTAEFIKRFGVEDGSVEGLRAEVRKNMERELKSAIRNRVKSQAIEGLVKANDIDVPAALIDSEIDVLRRQAAQRFGGNEKQALELPRELFEEQAKRRVVVGLLLGEVIRTNELKADEERVKGLIEEMASAYEDPKEVIEFYSKNKELMDNMRNVALEEQAVEAVLAKAKVTEKETTFNELMN.

In terms of domain architecture, PPIase FKBP-type spans 161–246; the sequence is EDRVTIDFTG…LKKVEERELP (86 aa).

This sequence belongs to the FKBP-type PPIase family. Tig subfamily. In terms of assembly, homodimer and monomer. In vivo most of the ribosomes are in complex with monomeric TF. Uncomplexed TF, however, is in a monomer-dimer equilibrium with approximately two thirds of TF existing in a dimeric state.

It localises to the cytoplasm. It carries out the reaction [protein]-peptidylproline (omega=180) = [protein]-peptidylproline (omega=0). Involved in protein export. Acts as a chaperone by maintaining the newly synthesized protein in an open conformation. Functions as a peptidyl-prolyl cis-trans isomerase. The polypeptide is Trigger factor (Escherichia coli O45:K1 (strain S88 / ExPEC)).